We begin with the raw amino-acid sequence, 455 residues long: Immunoglobulin alpha-2 heavy chain (455 aa).

Ig-like domains are found at residues 1 to 95 (EVQL…VYYC), 121 to 213 (PKVF…QDVT), 227 to 322 (PRLS…ANIT), and 330 to 432 (PEVH…KTID). Residues 1–115 (EVQLVETGGG…GKGTTVTVSS (115 aa)) form a variable (V) domain, involved in antigen recognition region. Cystine bridges form between cysteine 22–cysteine 95 and cysteine 141–cysteine 200. A constant (C) domain region spans residues 116–455 (ASPTSPKVFP…VMAEADGTCY (340 aa)). N-linked (GlcNAc...) asparagine glycosylation is found at asparagine 162, asparagine 207, and asparagine 246. Disulfide bonds link cysteine 225-cysteine 282 and cysteine 249-cysteine 306. Residue asparagine 320 is glycosylated (N-linked (GlcNAc...) asparagine). Cysteine 352 and cysteine 415 form a disulfide bridge. A glycan (N-linked (GlcNAc...) asparagine) is linked at asparagine 442.

Immunoglobulins are composed of two identical heavy chains and two identical light chains; disulfide-linked. Monomeric or polymeric.

The protein localises to the secreted. It is found in the cell membrane. Its function is as follows. Immunoglobulins, also known as antibodies, are membrane-bound or secreted glycoproteins produced by B lymphocytes. In the recognition phase of humoral immunity, the membrane-bound immunoglobulins serve as receptors which, upon binding of a specific antigen, trigger the clonal expansion and differentiation of B lymphocytes into immunoglobulins-secreting plasma cells. Secreted immunoglobulins mediate the effector phase of humoral immunity, which results in the elimination of bound antigens. The antigen binding site is formed by the variable domain of one heavy chain, together with that of its associated light chain. Thus, each immunoglobulin has two antigen binding sites with remarkable affinity for a particular antigen. The variable domains are assembled by a process called V-(D)-J rearrangement and can then be subjected to somatic hypermutations which, after exposure to antigen and selection, allow affinity maturation for a particular antigen. Ig alpha is the major immunoglobulin class in body secretions. The sequence is that of Immunoglobulin alpha-2 heavy chain from Homo sapiens (Human).